The sequence spans 564 residues: Kelch repeat and BTB domain-containing protein A55 (564 aa).

One can recognise a BTB domain in the interval 21–88 (CDISIVINDE…IYGIPLSLTN (68 aa)). 6 Kelch repeats span residues 252–297 (IELI…VLDN), 298–346 (IIYM…ADDE), 347–395 (YIYC…MLNG), 397–441 (IYVM…VHDG), 442–492 (KIYI…SAHN), and 494–539 (LYVG…CEPI).

The protein belongs to the poxviruses A55 protein family. As to quaternary structure, interacts (via BTB domain) with host CUL3.

It is found in the host cytoplasm. Its function is as follows. Probable substrate-specific adapter of CUL3-containing E3 ubiquitin-protein ligases which mediate the ubiquitination and subsequent proteasomal degradation of host target proteins. The polypeptide is Kelch repeat and BTB domain-containing protein A55 (KBTB1) (Bos taurus (Bovine)).